The primary structure comprises 135 residues: MYNKLPISYSRKHTQFQSSIISEILVWIEGNLTNRLSLDDIAQHSGYTKWHLQRVFRKIVGMPLGEYIRRRRICEAAKELQTTNLQVIDIALKYQFDSQQSFAKRFKAYLGISPSLYRLSDTGYNDLLLLEPKVA.

The HTH araC/xylS-type domain occupies 22–120 (SEILVWIEGN…GISPSLYRLS (99 aa)). 2 consecutive DNA-binding regions (H-T-H motif) follow at residues 39 to 60 (DDIA…RKIV) and 87 to 110 (VIDI…KAYL).

In terms of biological role, transcriptional activator of 2'-N-acetyltransferase. This chain is HTH-type transcriptional activator AarP (aarP), found in Providencia stuartii.